We begin with the raw amino-acid sequence, 106 residues long: Guanylate cyclase activator 2B (106 aa).

Residues 1 to 21 form the signal peptide; that stretch reads MSRSQLWAAVVLLLLLQSAQG. The propeptide occupies 22-91; sequence VYIKYHGFQV…STFKALRTIA (70 aa). 3 disulfides stabilise this stretch: Cys-62–Cys-75, Cys-95–Cys-103, and Cys-98–Cys-106.

This sequence belongs to the guanylin family. As to expression, localized predominantly in intestinal villi and the corticomedullary junction of the kidney.

The protein resides in the secreted. In terms of biological role, endogenous activator of intestinal guanylate cyclase. It stimulates this enzyme through the same receptor binding region as the heat-stable enterotoxins. May be a potent physiological regulator of intestinal fluid and electrolyte transport. May be an autocrine/paracrine regulator of intestinal salt and water transport. The chain is Guanylate cyclase activator 2B (Guca2b) from Mus musculus (Mouse).